The following is a 226-amino-acid chain: 2-C-methyl-D-erythritol 4-phosphate cytidylyltransferase (226 aa).

The protein belongs to the IspD/TarI cytidylyltransferase family. IspD subfamily.

It carries out the reaction 2-C-methyl-D-erythritol 4-phosphate + CTP + H(+) = 4-CDP-2-C-methyl-D-erythritol + diphosphate. Its pathway is isoprenoid biosynthesis; isopentenyl diphosphate biosynthesis via DXP pathway; isopentenyl diphosphate from 1-deoxy-D-xylulose 5-phosphate: step 2/6. Functionally, catalyzes the formation of 4-diphosphocytidyl-2-C-methyl-D-erythritol from CTP and 2-C-methyl-D-erythritol 4-phosphate (MEP). The polypeptide is 2-C-methyl-D-erythritol 4-phosphate cytidylyltransferase (Parasynechococcus marenigrum (strain WH8102)).